The following is a 663-amino-acid chain: Translation factor GUF1, mitochondrial (663 aa).

The N-terminal 37 residues, 1 to 37, are a transit peptide targeting the mitochondrion; that stretch reads MRGCLQSVRLLTTALGQSPRRPLPFAFRLPPNASRLF. Positions 65–245 constitute a tr-type G domain; that stretch reads ERYRNFCIVA…TIVEQIPAPI (181 aa). GTP is bound by residues 74-81, 138-142, and 192-195; these read AHVDHGKS, DTPGH, and NKVD.

This sequence belongs to the TRAFAC class translation factor GTPase superfamily. Classic translation factor GTPase family. LepA subfamily.

It localises to the mitochondrion inner membrane. The catalysed reaction is GTP + H2O = GDP + phosphate + H(+). In terms of biological role, promotes mitochondrial protein synthesis. May act as a fidelity factor of the translation reaction, by catalyzing a one-codon backward translocation of tRNAs on improperly translocated ribosomes. Binds to mitochondrial ribosomes in a GTP-dependent manner. This chain is Translation factor GUF1, mitochondrial, found in Uncinocarpus reesii (strain UAMH 1704).